The sequence spans 122 residues: Putative iron-sulfur cluster insertion protein ErpA (122 aa).

Iron-sulfur cluster-binding residues include Cys50, Cys114, and Cys116.

The protein belongs to the HesB/IscA family. In terms of assembly, homodimer. Iron-sulfur cluster serves as cofactor.

In terms of biological role, required for insertion of 4Fe-4S clusters. In Bordetella petrii (strain ATCC BAA-461 / DSM 12804 / CCUG 43448), this protein is Putative iron-sulfur cluster insertion protein ErpA.